The chain runs to 836 residues: Protein translocase subunit SecA (836 aa).

ATP-binding positions include Gln85, 103–107, and Asp492; that span reads GEGKT. Residues Cys820, Cys822, Cys831, and Cys832 each coordinate Zn(2+).

It belongs to the SecA family. As to quaternary structure, monomer and homodimer. Part of the essential Sec protein translocation apparatus which comprises SecA, SecYEG and auxiliary proteins SecDF. Other proteins may also be involved. Zn(2+) is required as a cofactor.

The protein localises to the cell membrane. It is found in the cytoplasm. It carries out the reaction ATP + H2O + cellular proteinSide 1 = ADP + phosphate + cellular proteinSide 2.. Part of the Sec protein translocase complex. Interacts with the SecYEG preprotein conducting channel. Has a central role in coupling the hydrolysis of ATP to the transfer of proteins into and across the cell membrane, serving as an ATP-driven molecular motor driving the stepwise translocation of polypeptide chains across the membrane. The polypeptide is Protein translocase subunit SecA (Clostridium botulinum (strain Alaska E43 / Type E3)).